The chain runs to 166 residues: Polyadenylate-binding protein 2 (166 aa).

Positions 55–132 (QSVYVGNVDY…RPLKVTPKRT (78 aa)) constitute an RRM domain. The tract at residues 129-166 (PKRTNVPGMSRGRGRGRGRGRGRGRGGYRGRARGFAPY) is disordered. Residues 140 to 160 (GRGRGRGRGRGRGRGGYRGRA) are compositionally biased toward basic residues.

The protein localises to the nucleus. The polypeptide is Polyadenylate-binding protein 2 (pab2) (Schizosaccharomyces pombe (strain 972 / ATCC 24843) (Fission yeast)).